The following is a 353-amino-acid chain: MTAILERRESASLWARFCEWVTSTENRLYIGWFGVLMIPTLLTATSVFIIAFIAAPPVDIDGIREPVSGSLLYGNNIISGAIIPTSNAIGLHFYPIWEAASLDEWLYNGGPYQLIVCHFFLGICSYMGREWELSFRLGMRPWIAVAYSAPVAAATAVFIIYPIGQGSFSDGMPLGISGTFNFMIVFQAEHNILMHPFHMLGVAGVFGGSLFSAMHGSLVTSSLIRETTENESANEGYKFGQEEETYNIVAAHGYFGRLIFQYASFNNSRSLHFFLAAWPVVGIWFTALGISTMAFNLNGFNFNQSVVDSQGRVINTWADIINRANLGMEVMHERNAHNFPLDLAVVEAPAVNG.

Position 2 is an N-acetylthreonine (threonine 2). A Phosphothreonine modification is found at threonine 2. Helical transmembrane passes span 29 to 46 (YIGWFGVLMIPTLLTATS), 118 to 133 (HFFLGICSYMGREWEL), and 142 to 156 (WIAVAYSAPVAAATA). Residue histidine 118 coordinates chlorophyll a. Pheophytin a is bound at residue tyrosine 126. Residues aspartate 170 and glutamate 189 each coordinate [CaMn4O5] cluster. A helical membrane pass occupies residues 197–218 (FHMLGVAGVFGGSLFSAMHGSL). Histidine 198 contributes to the chlorophyll a binding site. A quinone is bound by residues histidine 215 and 264–265 (SF). Position 215 (histidine 215) interacts with Fe cation. Histidine 272 contributes to the Fe cation binding site. The helical transmembrane segment at 274–288 (FLAAWPVVGIWFTAL) threads the bilayer. Residues histidine 332, glutamate 333, aspartate 342, and alanine 344 each coordinate [CaMn4O5] cluster. A propeptide spanning residues 345-353 (VVEAPAVNG) is cleaved from the precursor.

This sequence belongs to the reaction center PufL/M/PsbA/D family. PSII is composed of 1 copy each of membrane proteins PsbA, PsbB, PsbC, PsbD, PsbE, PsbF, PsbH, PsbI, PsbJ, PsbK, PsbL, PsbM, PsbT, PsbX, PsbY, PsbZ, Psb30/Ycf12, at least 3 peripheral proteins of the oxygen-evolving complex and a large number of cofactors. It forms dimeric complexes. The cofactor is The D1/D2 heterodimer binds P680, chlorophylls that are the primary electron donor of PSII, and subsequent electron acceptors. It shares a non-heme iron and each subunit binds pheophytin, quinone, additional chlorophylls, carotenoids and lipids. D1 provides most of the ligands for the Mn4-Ca-O5 cluster of the oxygen-evolving complex (OEC). There is also a Cl(-1) ion associated with D1 and D2, which is required for oxygen evolution. The PSII complex binds additional chlorophylls, carotenoids and specific lipids.. Post-translationally, tyr-161 forms a radical intermediate that is referred to as redox-active TyrZ, YZ or Y-Z. C-terminally processed by CTPA; processing is essential to allow assembly of the oxygen-evolving complex and thus photosynthetic growth.

Its subcellular location is the plastid. It localises to the chloroplast thylakoid membrane. The enzyme catalyses 2 a plastoquinone + 4 hnu + 2 H2O = 2 a plastoquinol + O2. In terms of biological role, photosystem II (PSII) is a light-driven water:plastoquinone oxidoreductase that uses light energy to abstract electrons from H(2)O, generating O(2) and a proton gradient subsequently used for ATP formation. It consists of a core antenna complex that captures photons, and an electron transfer chain that converts photonic excitation into a charge separation. The D1/D2 (PsbA/PsbD) reaction center heterodimer binds P680, the primary electron donor of PSII as well as several subsequent electron acceptors. This is Photosystem II protein D1 from Chlorella vulgaris (Green alga).